The primary structure comprises 138 residues: MLIPRRVKHRKQHHPTRRGAASGGTRVTFGDYGIMAVEGGYVTNRQIESARIAITRHIRRGGKVWINIYPDRPLTKKPAETRMGSGKGSPEWWIANIKPGRVMFELSFPTEKIATEALTRAIHKLPVKCKIVRREGGE.

Over residues 1–17 (MLIPRRVKHRKQHHPTR) the composition is skewed to basic residues. The disordered stretch occupies residues 1–24 (MLIPRRVKHRKQHHPTRRGAASGG).

This sequence belongs to the universal ribosomal protein uL16 family. In terms of assembly, part of the 50S ribosomal subunit.

Functionally, binds 23S rRNA and is also seen to make contacts with the A and possibly P site tRNAs. This is Large ribosomal subunit protein uL16 from Kineococcus radiotolerans (strain ATCC BAA-149 / DSM 14245 / SRS30216).